The primary structure comprises 1091 residues: MAALAGEDKDVDAFLADCTASGDAAYGAAKAVLERLHAPATRPAARRLLGAVRRRFAASRAAGEDCFRTFHFRIHDVVLDPHVQGFQQMKKLTMMEIPSIFIPEDWSFTFYEGLNRHPDSIFRDKTVAELGCGNGWISIALAEKWCPSKVYGLDINPRAVKIAWINLYLNALDDDGLPIYDGEGKTLLDRVEFYESDLLSYCRDNKIELDRIVGCIPQILNPNPEAMSKIVTENSSEEFLYALSNYCALQGFVEDQFGLGLIARAVEEGISVIKPSGIMVFNMGGRPGQGVCERLFRRRGFRITKLWQTKIMQXADTDISALVEXEKNSRHRFEFFMDLVGBQPICARTAWAYMKSGGHISHALSVYSCQLRQPNQVKKIFEFLKDGFHEVSSSLDLSFDDDSVAEEKIPFLAYLASFLKENKSNPCEPPAGCLNFRKLVAGFMKSYHHIPLTPDNVVVFPSRSVAIENALQLFSPALAIVDEHLTRHLPKQWLTSLAIEGRADCNHADGTVTVIEAPRQSDLLIELIRKLQPQVVVTGMAQFEAITSAAFENLLNVTKDVGSRLFLDISEHLELSSLPSSNGVLKYLAGKTLPSHAAILCGLVKNQVYSDLEVAFAISEDAAVYKALSQTIELLEGHTSLISQHYYGCLFHELLAFQIADRHPQQERQPAEVIPQQMIGFSDPAVSTLKATEFFVPGSAESSIIHMDLDRSFLPVPSAVNASVFESFVRQNITDSETDVRSSIQQLVKDSYGLSAAGCAEIIYGNTSVALFNKLVLCCMQEQGTLLFPLGTNGHYVSAAKFVNASTVTIPTNPSSGFRIEPKVLADTLKNVSRPWVYVCGPTINPTGFLYSDSDIRELLSVCAEYGARVVIDTSFSGLEYETDGWRQWNLAGCLSSLKRSEPSFSVVLLGELSFALTAGGHDFGFVILGDSSLAETFHSFSSLSRPHTTLKYTFKKLLGLKNQKDQHFSDLIVEQKEELKNRANQLIQTLESCGWEAAIGCGGISMLAKPTAYMGKAFKAAGFDGELDASNIREAILRATGLCINSSSWTGIPGYCRFSFALERGEFERAMGCIARFKELVLGGAQMNGA.

Belongs to the class I-like SAM-binding methyltransferase superfamily. Homotetramer.

The protein resides in the cytoplasm. It carries out the reaction L-methionine + S-adenosyl-L-methionine = S-methyl-L-methionine + S-adenosyl-L-homocysteine. In terms of biological role, catalyzes the S-methylmethionine (SMM) biosynthesis from adenosyl-L-homocysteine (AdoMet) and methionine. SMM biosynthesis (by MMT1) and degradation (by HMT-1, HMT-2 and HMT-3) constitute the SMM cycle in plants, which is probably required to achieve short term control of AdoMet level. Also able to catalyze the selenium-methylmethionine (SeMM) from AdoMet and selenium-methionine (SeMet). May play a role in phoem sulfur transport; such function is however not essential. This is Methionine S-methyltransferase (MMT1) from Zea mays (Maize).